A 171-amino-acid polypeptide reads, in one-letter code: NADH-quinone oxidoreductase subunit I (171 aa).

4Fe-4S ferredoxin-type domains follow at residues 41–71 (LTRD…VVKT) and 81–110 (ESFT…LTPD). Cysteine 51, cysteine 54, cysteine 57, cysteine 61, cysteine 90, cysteine 93, cysteine 96, and cysteine 100 together coordinate [4Fe-4S] cluster.

This sequence belongs to the complex I 23 kDa subunit family. NDH-1 is composed of 13 different subunits. Subunits NuoA, H, J, K, L, M, N constitute the membrane sector of the complex. [4Fe-4S] cluster is required as a cofactor.

The protein resides in the cell inner membrane. The enzyme catalyses a quinone + NADH + 5 H(+)(in) = a quinol + NAD(+) + 4 H(+)(out). Its function is as follows. NDH-1 shuttles electrons from NADH, via FMN and iron-sulfur (Fe-S) centers, to quinones in the respiratory chain. The immediate electron acceptor for the enzyme in this species is believed to be ubiquinone. Couples the redox reaction to proton translocation (for every two electrons transferred, four hydrogen ions are translocated across the cytoplasmic membrane), and thus conserves the redox energy in a proton gradient. The protein is NADH-quinone oxidoreductase subunit I of Shewanella woodyi (strain ATCC 51908 / MS32).